The chain runs to 264 residues: Putative [LysW]-aminoadipate/[LysW]-glutamate kinase (264 aa).

Residues 34-35, Arg61, and Asn169 contribute to the substrate site; that span reads GG.

The protein belongs to the acetylglutamate kinase family. LysZ subfamily.

It is found in the cytoplasm. The catalysed reaction is [amino-group carrier protein]-C-terminal-N-(1,4-dicarboxybutan-1-yl)-L-glutamine + ATP = [amino-group carrier protein]-C-terminal-N-(1-carboxy-5-phosphooxy-5-oxopentan-1-yl)-L-glutamine + ADP. The enzyme catalyses [amino-group carrier protein]-C-terminal-gamma-(L-glutamyl)-L-glutamate + ATP = [amino-group carrier protein]-C-terminal-gamma-(5-phospho-L-glutamyl)-L-glutamate + ADP. The protein operates within amino-acid biosynthesis; L-lysine biosynthesis via AAA pathway; L-lysine from L-alpha-aminoadipate (Thermus route): step 2/5. It functions in the pathway amino-acid biosynthesis; L-arginine biosynthesis. Involved in both the arginine and lysine biosynthetic pathways. Phosphorylates the LysW-bound precursors glutamate (for arginine biosynthesis), respectively alpha-aminoadipate (for lysine biosynthesis). This is Putative [LysW]-aminoadipate/[LysW]-glutamate kinase from Ignicoccus hospitalis (strain KIN4/I / DSM 18386 / JCM 14125).